The primary structure comprises 75 residues: UPF0235 protein Ava_3894 (75 aa).

Residues 1 to 32 (MQKKVKVKPNSKQQKIAEQDDGSLTVHLKSPP) are disordered.

The protein belongs to the UPF0235 family.

This chain is UPF0235 protein Ava_3894, found in Trichormus variabilis (strain ATCC 29413 / PCC 7937) (Anabaena variabilis).